The primary structure comprises 212 residues: Methylthioribulose-1-phosphate dehydratase (212 aa).

Positions 99 and 101 each coordinate Zn(2+).

Belongs to the aldolase class II family. MtnB subfamily. In terms of assembly, homotetramer. The cofactor is Zn(2+).

It carries out the reaction 5-(methylsulfanyl)-D-ribulose 1-phosphate = 5-methylsulfanyl-2,3-dioxopentyl phosphate + H2O. It participates in amino-acid biosynthesis; L-methionine biosynthesis via salvage pathway; L-methionine from S-methyl-5-thio-alpha-D-ribose 1-phosphate: step 2/6. Catalyzes the dehydration of methylthioribulose-1-phosphate (MTRu-1-P) into 2,3-diketo-5-methylthiopentyl-1-phosphate (DK-MTP-1-P). This chain is Methylthioribulose-1-phosphate dehydratase, found in Bacillus pumilus (strain SAFR-032).